We begin with the raw amino-acid sequence, 312 residues long: DDRGK domain-containing protein 1 (312 aa).

Topologically, residues 1–2 (ME) are lumenal. Residues 3 to 23 (LIILVGIATALLVVIITLYLL) form a helical membrane-spanning segment. Residues 24-312 (QKKNAAPETK…ISAGGEEASS (289 aa)) lie on the Cytoplasmic side of the membrane. The span at 59 to 79 (NQRNRLRQNAPAAPAGQVAPA) shows a compositional bias: low complexity. The interval 59 to 162 (NQRNRLRQNA…RKHQEDLEAE (104 aa)) is disordered. Positions 110–162 (LDEKMGAKKRAKMEAKEQKRLQREQELHDREQRKVKEAKEEAERKHQEDLEAE) are enriched in basic and acidic residues.

It belongs to the DDRGK1 family. Interacts with Atg9; the interaction is transient.

The protein localises to the endoplasmic reticulum membrane. Its function is as follows. Substrate adapter for ufmylation, the covalent attachment of the ubiquitin-like modifier UFM1 to substrate proteins. Required for ufmylation of Atg9; protects the nervous system during aging, possibly by stabilizing Atg9 and supporting its function. The sequence is that of DDRGK domain-containing protein 1 from Drosophila yakuba (Fruit fly).